The primary structure comprises 203 residues: Xrcc4-like factor 1 (203 aa).

It belongs to the XRCC4-XLF family. XLF subfamily.

The protein localises to the nucleus. Functionally, involved in double-strand break repair via non-homologous end joining (NHEJ); the repair of a double-strand break in DNA in which the two broken ends are rejoined with little or no sequence complementarity. Has a role in meiosis. The sequence is that of Xrcc4-like factor 1 (xlf1) from Schizosaccharomyces pombe (strain 972 / ATCC 24843) (Fission yeast).